The following is a 319-amino-acid chain: 4-hydroxy-3-methylbut-2-enyl diphosphate reductase (319 aa).

Cys-15 serves as a coordination point for [4Fe-4S] cluster. His-44 and His-77 together coordinate (2E)-4-hydroxy-3-methylbut-2-enyl diphosphate. The dimethylallyl diphosphate site is built by His-44 and His-77. 2 residues coordinate isopentenyl diphosphate: His-44 and His-77. Cys-99 lines the [4Fe-4S] cluster pocket. His-127 contacts (2E)-4-hydroxy-3-methylbut-2-enyl diphosphate. His-127 is a dimethylallyl diphosphate binding site. Position 127 (His-127) interacts with isopentenyl diphosphate. The active-site Proton donor is Glu-129. Thr-167 contacts (2E)-4-hydroxy-3-methylbut-2-enyl diphosphate. Cys-197 is a binding site for [4Fe-4S] cluster. Residues Ser-225, Ser-226, Asn-227, and Ser-269 each contribute to the (2E)-4-hydroxy-3-methylbut-2-enyl diphosphate site. 4 residues coordinate dimethylallyl diphosphate: Ser-225, Ser-226, Asn-227, and Ser-269. Ser-225, Ser-226, Asn-227, and Ser-269 together coordinate isopentenyl diphosphate.

This sequence belongs to the IspH family. The cofactor is [4Fe-4S] cluster.

The enzyme catalyses isopentenyl diphosphate + 2 oxidized [2Fe-2S]-[ferredoxin] + H2O = (2E)-4-hydroxy-3-methylbut-2-enyl diphosphate + 2 reduced [2Fe-2S]-[ferredoxin] + 2 H(+). It carries out the reaction dimethylallyl diphosphate + 2 oxidized [2Fe-2S]-[ferredoxin] + H2O = (2E)-4-hydroxy-3-methylbut-2-enyl diphosphate + 2 reduced [2Fe-2S]-[ferredoxin] + 2 H(+). It participates in isoprenoid biosynthesis; dimethylallyl diphosphate biosynthesis; dimethylallyl diphosphate from (2E)-4-hydroxy-3-methylbutenyl diphosphate: step 1/1. Its pathway is isoprenoid biosynthesis; isopentenyl diphosphate biosynthesis via DXP pathway; isopentenyl diphosphate from 1-deoxy-D-xylulose 5-phosphate: step 6/6. Functionally, catalyzes the conversion of 1-hydroxy-2-methyl-2-(E)-butenyl 4-diphosphate (HMBPP) into a mixture of isopentenyl diphosphate (IPP) and dimethylallyl diphosphate (DMAPP). Acts in the terminal step of the DOXP/MEP pathway for isoprenoid precursor biosynthesis. In Rhodopirellula baltica (strain DSM 10527 / NCIMB 13988 / SH1), this protein is 4-hydroxy-3-methylbut-2-enyl diphosphate reductase.